A 229-amino-acid polypeptide reads, in one-letter code: Chloride conductance regulatory protein ICln (229 aa).

The protein belongs to the pICln (TC 1.A.47) family. Homooligomer.

The protein resides in the cytoplasm. The protein localises to the nucleus. In terms of biological role, may participate in cellular volume control by activation of a swelling-induced chloride conductance pathway. The chain is Chloride conductance regulatory protein ICln from Arabidopsis thaliana (Mouse-ear cress).